The primary structure comprises 425 residues: Orexin/Hypocretin receptor type 1 (425 aa).

Residues 1-24 form a disordered region; the sequence is MEPSATPGAQMGVPPGSREPSPVP. Residues 1-46 lie on the Extracellular side of the membrane; that stretch reads MEPSATPGAQMGVPPGSREPSPVPPDYEDEFLRYLWRDYLYPKQYE. A required for response to orexin-A region spans residues 26 to 41; it reads DYEDEFLRYLWRDYLY. Residues 47-67 traverse the membrane as a helical segment; that stretch reads WVLIAAYVAVFVVALVGNTLV. Residues 68–82 lie on the Cytoplasmic side of the membrane; it reads CLAVWRNHHMRTVTN. The helical transmembrane segment at 83 to 105 threads the bilayer; it reads YFIVNLSLADVLVTAICLPASLL. At 106–119 the chain is on the extracellular side; sequence VDITESWLFGHALC. C119 and C202 are oxidised to a cystine. Residues 120 to 140 traverse the membrane as a helical segment; sequence KVIPYLQAVSVSVAVLTLSFI. Residues 141 to 160 are Cytoplasmic-facing; that stretch reads ALDRWYAICHPLLFKSTARR. The chain crosses the membrane as a helical span at residues 161-182; that stretch reads ARGSILGIWAVSLAIMVPQAAV. Residues 183-213 are Extracellular-facing; that stretch reads MECSSVLPELANRTRLFSVCDERWADDLYPK. N194 carries N-linked (GlcNAc...) asparagine glycosylation. A helical transmembrane segment spans residues 214-235; it reads IYHSCFFIVTYLAPLGLMAMAY. The Cytoplasmic segment spans residues 236 to 298; sequence FQIFRKLWGR…QMRARRKTAK (63 aa). Residues 299-321 form a helical membrane-spanning segment; it reads MLMVVLLVFALCYLPISVLNVLK. N318 provides a ligand contact to suvorexant. Topologically, residues 322-336 are extracellular; that stretch reads RVFGMFRQASDREAV. A helical membrane pass occupies residues 337–360; it reads YACFTFSHWLVYANSAANPIIYNF. Residues 361–425 are Cytoplasmic-facing; sequence LSGKFREQFK…VLTSVTTVLP (65 aa).

The protein belongs to the G-protein coupled receptor 1 family.

It is found in the cell membrane. Its function is as follows. Moderately selective excitatory receptor for orexin-A and, with a lower affinity, for orexin-B neuropeptide. Triggers an increase in cytoplasmic Ca(2+) levels in response to orexin-A binding. The sequence is that of Orexin/Hypocretin receptor type 1 from Homo sapiens (Human).